The chain runs to 189 residues: Mediator of RNA polymerase II transcription subunit 10b (189 aa).

Positions 1–22 (MDPTQNTSAGIGGSNGTIRYQT) are disordered.

Belongs to the Mediator complex subunit 10 family. As to quaternary structure, component of the Mediator complex.

The protein resides in the nucleus. Component of the Mediator complex, a coactivator involved in the regulated transcription of nearly all RNA polymerase II-dependent genes. Mediator functions as a bridge to convey information from gene-specific regulatory proteins to the basal RNA polymerase II transcription machinery. The Mediator complex, having a compact conformation in its free form, is recruited to promoters by direct interactions with regulatory proteins and serves for the assembly of a functional preinitiation complex with RNA polymerase II and the general transcription factors. In Arabidopsis thaliana (Mouse-ear cress), this protein is Mediator of RNA polymerase II transcription subunit 10b (MED10B).